Here is a 588-residue protein sequence, read N- to C-terminus: Adenine deaminase (588 aa).

It belongs to the metallo-dependent hydrolases superfamily. Adenine deaminase family. In terms of assembly, homodimer. The cofactor is Mn(2+).

The catalysed reaction is adenine + H2O + H(+) = hypoxanthine + NH4(+). The protein is Adenine deaminase of Escherichia coli O45:K1 (strain S88 / ExPEC).